Reading from the N-terminus, the 111-residue chain is COX assembly mitochondrial protein (111 aa).

The region spanning Y39–E82 is the CHCH domain. Short sequence motifs (cx9C motif) lie at residues C42 to C52 and C64 to C74. Disulfide bonds link C42–C74 and C52–C64.

The protein belongs to the CMC family.

The protein localises to the mitochondrion inner membrane. Functionally, required for mitochondrial cytochrome c oxidase (COX) assembly and respiration. Binds copper. May be involved in copper trafficking and distribution to mitochondrial COX and SOD1. The sequence is that of COX assembly mitochondrial protein (CMC1) from Saccharomyces cerevisiae (strain RM11-1a) (Baker's yeast).